The following is a 218-amino-acid chain: Embryonic polyadenylate-binding protein 2-A (218 aa).

Residues Met1 to Gly16 are compositionally biased toward basic and acidic residues. Disordered stretches follow at residues Met1–Glu26 and Arg169–Tyr218. An RRM domain is found at Arg93–Thr170. Positions Phe205 to Tyr218 are enriched in low complexity.

It localises to the cytoplasm. In terms of biological role, binds the poly(A) tail of mRNA. Unable to interact with the cap-binding complex and is therefore unlikely to be involved in translation initiation. The chain is Embryonic polyadenylate-binding protein 2-A (Pabpn1l-a) from Xenopus laevis (African clawed frog).